A 354-amino-acid chain; its full sequence is Annexin A13 (354 aa).

Annexin repeat units follow at residues 26-97 (NDPN…MLLT), 98-177 (DTDK…ALLQ), 203-275 (NLVE…LTLN), and 279-350 (NRPK…ALIG). Met-39, Gly-41, Gly-43, Thr-44, Glu-46, Glu-83, Met-111, Gly-113, Gly-115, Glu-118, Asp-163, Asp-265, Met-292, Gly-294, Leu-295, Gly-296, and Glu-336 together coordinate Ca(2+).

The protein belongs to the annexin family. Homodimer.

The protein localises to the tegument. Its subcellular location is the secreted. It localises to the extracellular exosome. It is found in the host cell. Involved in reproduction of the worm. Involved in host-parasite interaction. Delivered into the host cell by means of parasite exosomes. Binds to acidic phospholipid membranes in a calcium-dependent manner in vitro. Causes aggregation of liposomes in the presence of calcium, but not in its absence. Likely to promote membrane fusion. May provide structural integrity within the tegument. The chain is Annexin A13 from Schistosoma japonicum (Blood fluke).